Consider the following 1024-residue polypeptide: Beta-galactosidase (1024 aa).

Substrate contacts are provided by Asn103 and Asp202. Residue Asp202 participates in Na(+) binding. Mg(2+) is bound by residues Glu417, His419, and Glu462. Substrate is bound by residues Glu462 and 538 to 541 (EYAH). Glu462 acts as the Proton donor in catalysis. The active-site Nucleophile is Glu538. Asn598 lines the Mg(2+) pocket. Residues Phe602 and Asn605 each coordinate Na(+). 2 residues coordinate substrate: Asn605 and Trp1000.

The protein belongs to the glycosyl hydrolase 2 family. As to quaternary structure, homotetramer. The cofactor is Mg(2+). Na(+) serves as cofactor.

It catalyses the reaction Hydrolysis of terminal non-reducing beta-D-galactose residues in beta-D-galactosides.. This Escherichia coli O6:H1 (strain CFT073 / ATCC 700928 / UPEC) protein is Beta-galactosidase.